The following is a 416-amino-acid chain: 5-methylthioadenosine/S-adenosylhomocysteine deaminase 2 (416 aa).

2 residues coordinate Zn(2+): H58 and H60. Residues E86 and H178 each contribute to the substrate site. H205 serves as a coordination point for Zn(2+). Substrate contacts are provided by E208 and D293. Zn(2+) is bound at residue D293.

This sequence belongs to the metallo-dependent hydrolases superfamily. MTA/SAH deaminase family. Zn(2+) is required as a cofactor.

The catalysed reaction is S-adenosyl-L-homocysteine + H2O + H(+) = S-inosyl-L-homocysteine + NH4(+). It carries out the reaction S-methyl-5'-thioadenosine + H2O + H(+) = S-methyl-5'-thioinosine + NH4(+). Catalyzes the deamination of 5-methylthioadenosine and S-adenosyl-L-homocysteine into 5-methylthioinosine and S-inosyl-L-homocysteine, respectively. Is also able to deaminate adenosine. This Archaeoglobus fulgidus (strain ATCC 49558 / DSM 4304 / JCM 9628 / NBRC 100126 / VC-16) protein is 5-methylthioadenosine/S-adenosylhomocysteine deaminase 2.